The sequence spans 1140 residues: Squamosa promoter-binding-like protein 15 (1140 aa).

Disordered stretches follow at residues 73–112 (RVNA…LNLQ) and 124–177 (DVSP…GGNS). 2 stretches are compositionally biased toward low complexity: residues 76–100 (AGLS…EALR) and 125–135 (VSPAATTVSSS). Over residues 164–177 (ASGGGGGGGGGGNS) the composition is skewed to gly residues. The segment at 184 to 261 (YPMCQVDDCR…AGHNRRRRKT (78 aa)) adopts an SBP-type zinc-finger fold. Positions 187, 192, 209, 212, 228, 231, 235, and 247 each coordinate Zn(2+). A Bipartite nuclear localization signal motif is present at residues 244 to 260 (KRSCRRRLAGHNRRRRK). 4 disordered regions span residues 327-382 (NNGN…ADGF), 403-472 (TSNP…TPPY), 496-517 (LSSE…PVTH), and 558-597 (KDSE…DGQD). Residues 345–375 (ASHSQQQDSVQRTTNGFEKQTNGLDKQTNGF) show a composition bias toward polar residues. A compositionally biased stretch (low complexity) spans 403-430 (TSNPDSNTSQSQGSSDSSGNNKSKSQST). Residues 450–466 (RKNDALERSPEMYKQPD) show a composition bias toward basic and acidic residues. Polar residues predominate over residues 496–514 (LSSESSNPLDERSPSSSPP). The segment covering 579–593 (TSTSCSDHSPSTSNS) has biased composition (low complexity).

As to expression, expressed in stems, leaf sheaths, and young panicles.

The protein localises to the nucleus. Functionally, trans-acting factor that binds specifically to the consensus nucleotide sequence 5'-TNCGTACAA-3'. The protein is Squamosa promoter-binding-like protein 15 (SPL15) of Oryza sativa subsp. indica (Rice).